The primary structure comprises 222 residues: Twisted gastrulation protein homolog 1 (222 aa).

The first 24 residues, 1-24 (MKSHYIVLALASLTFLLCLPVSQS), serve as a signal peptide directing secretion. 2 N-linked (GlcNAc...) asparagine glycosylation sites follow: Asn-80 and Asn-146.

Belongs to the twisted gastrulation protein family. In terms of assembly, interacts with CHRD and/or BMP4. This interaction enhances CHRD/BMP4 complex formation. Interacts with BMP7. Expressed in lymph node, liver, kidney, and lung. Expression in the kidney was stronger in the medulla than in the cortex, particularly in the cells surrounding the medullary tubules. Expressed in growth plate cartilage of long bones, ribs, and digits and to a lesser extent also in the resting zone of the epiphysis, trabecular bone, and vertebral cartilage. Expression seems to be absent from other skeletal tissues including muscle, skin, and fibroblasts.

Its subcellular location is the secreted. May be involved in dorsoventral axis formation. Seems to antagonize BMP signaling by forming ternary complexes with CHRD and BMPs, thereby preventing BMPs from binding to their receptors. In addition to the anti-BMP function, also has pro-BMP activity, partly mediated by cleavage and degradation of CHRD, which releases BMPs from ternary complexes. May be an important modulator of BMP-regulated cartilage development and chondrocyte differentiation. May play a role in thymocyte development. This chain is Twisted gastrulation protein homolog 1 (Twsg1), found in Mus musculus (Mouse).